Here is a 426-residue protein sequence, read N- to C-terminus: Mothers against decapentaplegic homolog 7 (426 aa).

A disordered region spans residues 14–40 (WRSRAPGGEDEEEGVGGGGGGGGLRGE). Gly residues predominate over residues 28–39 (VGGGGGGGGLRG). N6-acetyllysine; alternate is present on residues Lys-64 and Lys-70. Residues Lys-64 and Lys-70 each participate in a glycyl lysine isopeptide (Lys-Gly) (interchain with G-Cter in ubiquitin); alternate cross-link. The MH1 domain maps to 64–207 (KAVRGAKGHH…LSRLCELESP (144 aa)). The span at 67–76 (RGAKGHHHPH) shows a compositional bias: basic residues. Positions 67–88 (RGAKGHHHPHPPSSGAGAAGGA) are disordered. Zn(2+)-binding residues include Cys-125, Cys-180, Cys-192, and His-197. Residues 208 to 211 (PPPY) carry the PY-motif motif. The tract at residues 208–217 (PPPYSRYPMD) is important for interaction with SMURF2. Ser-249 carries the phosphoserine modification. Residues 261–426 (WCVVAYWEEK…CWLEVIFNSR (166 aa)) form the MH2 domain.

This sequence belongs to the dwarfin/SMAD family. In terms of assembly, interacts with COPS5. Interacts with STAMBP. Interacts with NEDD4L. Interacts with RNF111, AXIN1 and AXIN2. Interacts with PPP1R15A. Interacts with ACVR1B, SMURF1, SMURF2 and TGFBR1; SMAD7 recruits SMURF1 and SMURF2 to the TGF-beta receptor and regulates its degradation. Interacts with WWP1. Interacts with PDPK1 (via PH domain). Interacts with TSC22D1/TSC-22; the interaction requires TGF-beta and the interaction is inhibited by TGFBR1. Post-translationally, phosphorylation on Ser-249 does not affect its stability, nuclear localization or inhibitory function in TGFB signaling; however it affects its ability to regulate transcription. Phosphorylated by PDPK1. In terms of processing, ubiquitinated by WWP1. Polyubiquitinated by RNF111, which is enhanced by AXIN1 and promotes proteasomal degradation. In response to TGF-beta, ubiquitinated by SMURF1; which promotes its degradation. Acetylation prevents ubiquitination and degradation mediated by SMURF1. Ubiquitous.

Its subcellular location is the nucleus. The protein resides in the cytoplasm. Functionally, antagonist of signaling by TGF-beta (transforming growth factor) type 1 receptor superfamily members; has been shown to inhibit TGF-beta (Transforming growth factor) and activin signaling by associating with their receptors thus preventing SMAD2 access. Functions as an adapter to recruit SMURF2 to the TGF-beta receptor complex. Also acts by recruiting the PPP1R15A-PP1 complex to TGFBR1, which promotes its dephosphorylation. Positively regulates PDPK1 kinase activity by stimulating its dissociation from the 14-3-3 protein YWHAQ which acts as a negative regulator. The sequence is that of Mothers against decapentaplegic homolog 7 (Smad7) from Rattus norvegicus (Rat).